A 335-amino-acid polypeptide reads, in one-letter code: Tetraacyldisaccharide 4'-kinase (335 aa).

ATP is bound at residue T59–T66.

This sequence belongs to the LpxK family.

The enzyme catalyses a lipid A disaccharide + ATP = a lipid IVA + ADP + H(+). The protein operates within glycolipid biosynthesis; lipid IV(A) biosynthesis; lipid IV(A) from (3R)-3-hydroxytetradecanoyl-[acyl-carrier-protein] and UDP-N-acetyl-alpha-D-glucosamine: step 6/6. In terms of biological role, transfers the gamma-phosphate of ATP to the 4'-position of a tetraacyldisaccharide 1-phosphate intermediate (termed DS-1-P) to form tetraacyldisaccharide 1,4'-bis-phosphate (lipid IVA). The sequence is that of Tetraacyldisaccharide 4'-kinase from Aliivibrio salmonicida (strain LFI1238) (Vibrio salmonicida (strain LFI1238)).